Reading from the N-terminus, the 950-residue chain is ABC transporter A family member 9 (950 aa).

The next 6 helical transmembrane spans lie at Ala31 to Glu51, Ile223 to Phe243, Trp276 to Met296, Phe308 to Ala328, Val342 to Pro362, and Ile426 to Ile446. The region spanning Val520 to Ser765 is the ABC transporter domain. Gly566–Thr573 provides a ligand contact to ATP.

Belongs to the ABC transporter superfamily. ABCA family. CPR flippase (TC 3.A.1.211) subfamily. Highly expressed in siliques. Detected in seedlings, rosette leaves, stems and flowers.

Its subcellular location is the endoplasmic reticulum membrane. Functionally, mediates the transport of acyl-CoAs and/or free fatty acids to the endoplasmic reticulum. Has no effect on the selectivity of fatty acid incorporation into triacylglycerol or further desaturation steps. The protein is ABC transporter A family member 9 (ABCA9) of Arabidopsis thaliana (Mouse-ear cress).